A 554-amino-acid polypeptide reads, in one-letter code: Putative acyl-coenzyme A synthetase (554 aa).

Residue leucine 195–lysine 206 participates in AMP binding.

It belongs to the ATP-dependent AMP-binding enzyme family.

The protein is Putative acyl-coenzyme A synthetase of Emericella nidulans (strain FGSC A4 / ATCC 38163 / CBS 112.46 / NRRL 194 / M139) (Aspergillus nidulans).